A 940-amino-acid chain; its full sequence is Isoleucine--tRNA ligase (940 aa).

The short motif at 58–68 (PYANGSIHIGH) is the 'HIGH' region element. Glu-564 lines the L-isoleucyl-5'-AMP pocket. Residues 605 to 609 (KMSKS) carry the 'KMSKS' region motif. An ATP-binding site is contributed by Lys-608. Residues Cys-903, Cys-906, Cys-923, and Cys-926 each contribute to the Zn(2+) site.

It belongs to the class-I aminoacyl-tRNA synthetase family. IleS type 1 subfamily. As to quaternary structure, monomer. The cofactor is Zn(2+).

Its subcellular location is the cytoplasm. It catalyses the reaction tRNA(Ile) + L-isoleucine + ATP = L-isoleucyl-tRNA(Ile) + AMP + diphosphate. Catalyzes the attachment of isoleucine to tRNA(Ile). As IleRS can inadvertently accommodate and process structurally similar amino acids such as valine, to avoid such errors it has two additional distinct tRNA(Ile)-dependent editing activities. One activity is designated as 'pretransfer' editing and involves the hydrolysis of activated Val-AMP. The other activity is designated 'posttransfer' editing and involves deacylation of mischarged Val-tRNA(Ile). In Shewanella baltica (strain OS185), this protein is Isoleucine--tRNA ligase.